A 265-amino-acid chain; its full sequence is MDTAQKQRWAITLSYDGSRFYGWQKQADGVPTVQAALETALAQIAGEAVSTTVAGRTDTGVHATAQVVHFDTTAARPQQAWVRGVNAHLPEGIAVLHARQVAPEFHARFDAYGRHYRYLLESAPVRSPLLKNRAGWTHLKLDIGQMRQAAALLVGEQDFSSFRAAECQAKSPVKTIYRADLTQSSGLVRLDLHGNAFLHHMVRNIMGALVYVGSGRLSVEGFAALIQERSRLKAPPTFMPDGLYLTGVDYPEAYGIIRPQIPEWL.

Residue aspartate 58 is the Nucleophile of the active site. Tyrosine 116 lines the substrate pocket.

It belongs to the tRNA pseudouridine synthase TruA family. Homodimer.

It catalyses the reaction uridine(38/39/40) in tRNA = pseudouridine(38/39/40) in tRNA. Its function is as follows. Formation of pseudouridine at positions 38, 39 and 40 in the anticodon stem and loop of transfer RNAs. The sequence is that of tRNA pseudouridine synthase A from Neisseria meningitidis serogroup B (strain ATCC BAA-335 / MC58).